Reading from the N-terminus, the 394-residue chain is MTMIKITDLDLTGKRVLIRSDLNVPVKNGVITSNRKIHASLPTIKLALKKSKHVMVTSHLGRPIEGEYNAQFSLQPVVEYLKKQLINRYVKEVRLVKDYLEGVNFMEGELLILENVRFNKGEKKDDEILSKKYAMLCDVFIMDAFGSAHRTQASTHGIGKFVSLACSGLLLQKELEALGKALCNPMRPMVAIVGGSKVSTKLIVLDSLSKVADYLIVGGGIANTFLAAQGKKVGKSLYEEELIPTAKRLLENCDIPILTDVRVSTEFSETAPVTMKAIIDIKDNEQILDLGDESITRILDILNCAKTILWNGPIGVFEFPNFRKGTEMISHAIAKSNAFSIVGGGDTLMAIDLFDISNQISYISTGGGAFLEFIEGKTFPSVKMLEKHALNNMN.

Substrate is bound by residues 21 to 23, 59 to 62, R117, and R150; these read DLN and HLGR. Residues K201, E318, and 344–347 each bind ATP; that span reads GGDT.

It belongs to the phosphoglycerate kinase family. As to quaternary structure, monomer.

Its subcellular location is the cytoplasm. It carries out the reaction (2R)-3-phosphoglycerate + ATP = (2R)-3-phospho-glyceroyl phosphate + ADP. The protein operates within carbohydrate degradation; glycolysis; pyruvate from D-glyceraldehyde 3-phosphate: step 2/5. In Blochmanniella pennsylvanica (strain BPEN), this protein is Phosphoglycerate kinase.